Here is a 919-residue protein sequence, read N- to C-terminus: Translation initiation factor IF-2 (919 aa).

Residues 93–107 (MGKALPEEVPEKIAP) show a composition bias toward basic and acidic residues. Disordered regions lie at residues 93-145 (MGKA…PAEP) and 158-279 (KIQP…RKGE). The segment covering 136–145 (LAPPEKPAEP) has biased composition (pro residues). The span at 158–171 (KIQPPEKFAEEPLK) shows a compositional bias: basic and acidic residues. Residues 172–193 (KPAVIEPEKAAAAPKAVPGEAK) show a composition bias toward low complexity. 2 stretches are compositionally biased toward basic and acidic residues: residues 194–203 (PLPRTERVQE) and 256–279 (GAPKTEAEKPRKKIKLPDETRKGE). In terms of domain architecture, tr-type G spans 420 to 589 (PRAPVVTIMG…LLQADVLELK (170 aa)). A G1 region spans residues 429-436 (GHVDHGKT). 429 to 436 (GHVDHGKT) contacts GTP. The segment at 454 to 458 (GITQA) is G2. A G3 region spans residues 475–478 (DTPG). GTP is bound by residues 475 to 479 (DTPGH) and 529 to 532 (NKID). Positions 529–532 (NKID) are G4. The interval 565–567 (SAK) is G5.

This sequence belongs to the TRAFAC class translation factor GTPase superfamily. Classic translation factor GTPase family. IF-2 subfamily.

The protein localises to the cytoplasm. Functionally, one of the essential components for the initiation of protein synthesis. Protects formylmethionyl-tRNA from spontaneous hydrolysis and promotes its binding to the 30S ribosomal subunits. Also involved in the hydrolysis of GTP during the formation of the 70S ribosomal complex. The sequence is that of Translation initiation factor IF-2 from Syntrophus aciditrophicus (strain SB).